We begin with the raw amino-acid sequence, 338 residues long: 3 beta-hydroxysteroid dehydrogenase type 7 (338 aa).

The active-site Proton acceptor is Tyr-159. Lys-163 contacts NAD(+). 2 helical membrane passes run 258–278 (LLPYWLLVLLTALNALLQWLL) and 280–300 (PLVLYTPLLNPYTLAVANTTF).

This sequence belongs to the 3-beta-HSD family. High levels in liver and lung, moderate levels in spleen, brain, heart, kidney, jejunum and testis. Up-regulated in 3Y1 cells upon growth arrest.

The protein localises to the endoplasmic reticulum membrane. It carries out the reaction 7alpha-hydroxycholesterol + NAD(+) = 7alpha-hydroxycholest-4-en-3-one + NADH + H(+). It catalyses the reaction 7alpha,25-dihydroxycholesterol + NAD(+) = 7alpha,25-dihydroxy-4-cholesten-3-one + NADH + H(+). The enzyme catalyses (25R)-cholest-5-en-3beta,7alpha,26-triol + NAD(+) = (25R)-7alpha,26-dihydroxycholest-4-en-3-one + NADH + H(+). The catalysed reaction is (24S)-7alpha-dihydroxycholesterol + NAD(+) = (24S)-7alpha,24-dihydroxycholest-4-en-3-one + NADH + H(+). Its pathway is lipid metabolism; steroid biosynthesis. Functionally, the 3-beta-HSD enzymatic system plays a crucial role in the biosynthesis of all classes of hormonal steroids. HSD VII is active against four 7-alpha-hydroxylated sterols. Does not metabolize several different C(19/21) steroids as substrates. Involved in bile acid synthesis. Plays a key role in cell positioning and movement in lymphoid tissues by mediating degradation of 7-alpha,25-dihydroxycholesterol (7-alpha,25-OHC): 7-alpha,25-OHC acts as a ligand for the G protein-coupled receptor GPR183/EBI2, a chemotactic receptor for a number of lymphoid cells. The chain is 3 beta-hydroxysteroid dehydrogenase type 7 from Rattus norvegicus (Rat).